The chain runs to 316 residues: tRNA uridine(34) hydroxylase (316 aa).

A Rhodanese domain is found at Leu123–Glu217. Cys177 (cysteine persulfide intermediate) is an active-site residue.

It belongs to the TrhO family.

The catalysed reaction is uridine(34) in tRNA + AH2 + O2 = 5-hydroxyuridine(34) in tRNA + A + H2O. Its function is as follows. Catalyzes oxygen-dependent 5-hydroxyuridine (ho5U) modification at position 34 in tRNAs. The chain is tRNA uridine(34) hydroxylase from Staphylococcus saprophyticus subsp. saprophyticus (strain ATCC 15305 / DSM 20229 / NCIMB 8711 / NCTC 7292 / S-41).